Reading from the N-terminus, the 288-residue chain is Diaminopimelate epimerase (288 aa).

Residues asparagine 14 and asparagine 67 each contribute to the substrate site. The Proton donor role is filled by cysteine 76. Substrate contacts are provided by residues 77–78 (GN), asparagine 166, asparagine 199, and 217–218 (ER). Catalysis depends on cysteine 226, which acts as the Proton acceptor. 227–228 (GT) contributes to the substrate binding site.

Belongs to the diaminopimelate epimerase family. As to quaternary structure, homodimer.

The protein resides in the cytoplasm. It carries out the reaction (2S,6S)-2,6-diaminopimelate = meso-2,6-diaminopimelate. It functions in the pathway amino-acid biosynthesis; L-lysine biosynthesis via DAP pathway; DL-2,6-diaminopimelate from LL-2,6-diaminopimelate: step 1/1. In terms of biological role, catalyzes the stereoinversion of LL-2,6-diaminopimelate (L,L-DAP) to meso-diaminopimelate (meso-DAP), a precursor of L-lysine and an essential component of the bacterial peptidoglycan. The chain is Diaminopimelate epimerase from Bacillus anthracis (strain A0248).